A 459-amino-acid chain; its full sequence is Cyclic GMP-AMP synthase-like receptor 2 (459 aa).

Residues S68 and 79-81 (EFD) each bind ATP. Mg(2+)-binding residues include E79, D81, and D199. Residues D199 and 248–255 (RSSFYAVE) each bind GTP. An ATP-binding site is contributed by 252 to 255 (YAVE). H263 serves as a coordination point for Zn(2+). ATP is bound by residues K274 and 288–292 (SYYIK).

It belongs to the mab-21 family. It depends on Mg(2+) as a cofactor. Mn(2+) is required as a cofactor.

It catalyses the reaction GTP + ATP = 3',2'-cGAMP + 2 diphosphate. The enzyme catalyses GTP + ATP = 2',3'-cGAMP + 2 diphosphate. It carries out the reaction GTP + ATP = pppGp(2'-5')A + diphosphate. The catalysed reaction is pppA(2'-5')pG = 3',2'-cGAMP + diphosphate. It catalyses the reaction pppGp(2'-5')A = 2',3'-cGAMP + diphosphate. Its activity is regulated as follows. The enzyme activity is specifically activated by some nucleic acid. Functionally, nucleotidyltransferase that catalyzes the formation of cyclic GMP-AMP from ATP and GTP and plays a key role in antiviral innate immunity. Directly binds some unknown nucleic acid, activating the nucleotidyltransferase activity, leading to synthesis of both 3',2'-cGAMP and 2',3'-cGAMP second messengers. 3',2'-cGAMP and 2',3'-cGAMP bind to and activate Sting, thereby triggering the antiviral immune response via activation of the NF-kappa-B transcription factor Rel (Relish). This chain is Cyclic GMP-AMP synthase-like receptor 2, found in Drosophila melanogaster (Fruit fly).